We begin with the raw amino-acid sequence, 99 residues long: Cytochrome c oxidase subunit 4 isoform 1, mitochondrial (99 aa).

Over 1–73 (SVVKSEDFTL…SFAEMNRRSN (73 aa)) the chain is Mitochondrial matrix. At Lys-4 the chain carries N6-acetyllysine; alternate. N6-succinyllysine; alternate is present on Lys-4. The residue at position 28 (Lys-28) is an N6-acetyllysine. Residues Ser-31 and Ser-33 each carry the phosphoserine modification. Lys-35 is modified (N6-acetyllysine; alternate). Lys-35 carries the N6-succinyllysine; alternate modification. The residue at position 42 (Lys-42) is an N6-acetyllysine. Residues 74–99 (EWKTVVGTAMFFIGITALVIMWEKLY) traverse the membrane as a helical segment.

The protein belongs to the cytochrome c oxidase IV family. As to quaternary structure, component of the cytochrome c oxidase (complex IV, CIV), a multisubunit enzyme composed of 14 subunits. The complex is composed of a catalytic core of 3 subunits MT-CO1, MT-CO2 and MT-CO3, encoded in the mitochondrial DNA, and 11 supernumerary subunits COX4I, COX5A, COX5B, COX6A, COX6B, COX6C, COX7A, COX7B, COX7C, COX8 and NDUFA4, which are encoded in the nuclear genome. The complex exists as a monomer or a dimer and forms supercomplexes (SCs) in the inner mitochondrial membrane with NADH-ubiquinone oxidoreductase (complex I, CI) and ubiquinol-cytochrome c oxidoreductase (cytochrome b-c1 complex, complex III, CIII), resulting in different assemblies (supercomplex SCI(1)III(2)IV(1) and megacomplex MCI(2)III(2)IV(2)). Interacts with PHB2; the interaction decreases in absence of SPHK2. Interacts with AFG1L. Interacts with ABCB7; this interaction allows the regulation of cellular iron homeostasis and cellular reactive oxygen species (ROS) levels in cardiomyocytes. Interacts with FLVCR2; this interaction occurs in the absence of heme and is disrupted upon heme binding. Interacts with IRGC.

The protein localises to the mitochondrion inner membrane. Its pathway is energy metabolism; oxidative phosphorylation. In terms of biological role, component of the cytochrome c oxidase, the last enzyme in the mitochondrial electron transport chain which drives oxidative phosphorylation. The respiratory chain contains 3 multisubunit complexes succinate dehydrogenase (complex II, CII), ubiquinol-cytochrome c oxidoreductase (cytochrome b-c1 complex, complex III, CIII) and cytochrome c oxidase (complex IV, CIV), that cooperate to transfer electrons derived from NADH and succinate to molecular oxygen, creating an electrochemical gradient over the inner membrane that drives transmembrane transport and the ATP synthase. Cytochrome c oxidase is the component of the respiratory chain that catalyzes the reduction of oxygen to water. Electrons originating from reduced cytochrome c in the intermembrane space (IMS) are transferred via the dinuclear copper A center (CU(A)) of subunit 2 and heme A of subunit 1 to the active site in subunit 1, a binuclear center (BNC) formed by heme A3 and copper B (CU(B)). The BNC reduces molecular oxygen to 2 water molecules using 4 electrons from cytochrome c in the IMS and 4 protons from the mitochondrial matrix. The chain is Cytochrome c oxidase subunit 4 isoform 1, mitochondrial (COX4I1) from Mandrillus sphinx (Mandrill).